Here is a 675-residue protein sequence, read N- to C-terminus: Protein PALS1 (675 aa).

Residues 1 to 345 are required for the correct localization of PALS1 and PATJ at cell-cell contacts and the normal formation of tight junctions and adherens junctions; it reads MTTSYMNGHV…QQIKPPPAKE (345 aa). A phosphoserine mark is found at Ser14 and Ser25. Positions 21 to 140 are interaction with PARD6B; the sequence is LDLASPEEYP…LKHIQHTLVD (120 aa). Residues 51–79 are disordered; that stretch reads RRSAQLERIRQQQEDMRRRREEEGKKQEL. Residues 54 to 79 are compositionally biased toward basic and acidic residues; it reads AQLERIRQQQEDMRRRREEEGKKQEL. Phosphoserine is present on residues Ser83 and Ser84. L27 domains follow at residues 120–177 and 179–235; these read NILD…SKAS and PFPL…MQLE. The tract at residues 181–243 is interaction with LIN7C; it reads PLIANVQDLV…LEPITDERVY (63 aa). In terms of domain architecture, PDZ spans 256 to 336; sequence IVRIEKARDI…TLTFVLIPSQ (81 aa). The 73-residue stretch at 345–417 folds into the SH3 domain; that stretch reads ETVIHVKAHF…PGKSFQQQRE (73 aa). The region spanning 479–660 is the Guanylate kinase-like domain; the sequence is KRPIILIGPQ…AYQELLRLIN (182 aa). An ATP-binding site is contributed by 486–493; the sequence is GPQNCGQN.

It belongs to the MAGUK family. In terms of assembly, heterodimer with MPP1. Forms a heterotrimeric complex composed of PALS1, LIN7B and PATJ; the N-terminal L27 domain of PALS1 interacts with the L27 domain of PATJ and the C-terminal L27 domain of PALS1 interacts with the L27 domain of LIN7B. Component of a complex composed of PALS1, CRB1 and MPP4. Component of a complex whose core is composed of ARHGAP17, AMOT, PALS1, PATJ and PARD3/PAR3. Component of a complex composed of PALS1, CRB1 and EPB41L5. Within the complex, interacts (via HOOK domain) with EPB41L5 (via FERM domain), and interacts with CRB1 (via intracellular domain). Component of a complex composed of PALS1, MPP3 and CRB1; PALS1 acts as a bridging protein between MPP3 (via guanylate kinase-like domain) and CRB1. Component of a complex composed of CRB3, PALS1 and PATJ. As part of the Crumbs complex; interacts with WWP1, the interaction is enhanced by AMOTL2 and facilitates WWP1 localization to the plasma membrane. The Crumbs complex promotes monoubiquitination of AMOTL2 by WWP1, which activates the Hippo signaling pathway. Interacts (via PDZ domain) with PATJ (via N-terminus). Interacts with EZR. Interacts (via PDZ domain) with CRB1 (via C-terminal ERLI motif). While the PDZ domain is sufficient for interaction with CRB1, the adjacent SH3 and guanylate kinase-like domains are likely to contribute to a high affinity interaction. Interacts with WWTR1/TAZ (via WW domain). Interacts with MPP7. Interacts (via PDZ domain) with CRB3 (via C-terminus). Interacts with LIN7C. Interacts with MPDZ. Interacts with PARD6B. Interacts with SC6A1. Interacts with CDH5; the interaction promotes PALS1 localization to cell junctions and is required for CDH5-mediated vascular lumen formation and endothelial cell. Interacts with NPHP1 (via coiled coil and SH3 domains). Interacts with NPHP4. Interacts with CRB2. In terms of tissue distribution, expressed in the retinal pigment epithelium (at protein level). Expressed in the vascular plexus of the retina (at protein level). In the brain, expressed in the dentate gyrus of hippocampus, striatum and cerebellum (at protein level). Expressed in the sciatic nerve (at protein level). Expressed in the kidney nephron (at protein level). Expressed in the lung, and heart. Expressed in placenta, brain, skeletal muscles, pancreas and liver.

The protein resides in the golgi apparatus. It localises to the cell membrane. It is found in the endomembrane system. Its subcellular location is the cell junction. The protein localises to the tight junction. The protein resides in the adherens junction. It localises to the cell projection. It is found in the axon. Its subcellular location is the perikaryon. The protein localises to the apical cell membrane. In terms of biological role, plays a role in tight junction biogenesis and in the establishment of cell polarity in epithelial cells. Also involved in adherens junction biogenesis by ensuring correct localization of the exocyst complex protein EXOC4/SEC8 which allows trafficking of adherens junction structural component CDH1 to the cell surface. Plays a role through its interaction with CDH5 in vascular lumen formation and endothelial membrane polarity. Required during embryonic and postnatal retinal development. Required for the maintenance of cerebellar progenitor cells in an undifferentiated proliferative state, preventing premature differentiation, and is required for cerebellar histogenesis, fissure formation, cerebellar layer organization and cortical development. Plays a role in neuronal progenitor cell survival, potentially via promotion of mTOR signaling. Plays a role in the radial and longitudinal extension of the myelin sheath in Schwann cells. May modulate SC6A1/GAT1-mediated GABA uptake by stabilizing the transporter. May play a role in the T-cell receptor-mediated activation of NF-kappa-B. Required for localization of EZR to the apical membrane of parietal cells and may play a role in the dynamic remodeling of the apical cytoskeleton. Required for the normal polarized localization of the vesicular marker STX4. Required for the correct trafficking of the myelin proteins PMP22 and MAG. Involved in promoting phosphorylation and cytoplasmic retention of transcriptional coactivators YAP1 and WWTR1/TAZ which leads to suppression of TGFB1-dependent transcription of target genes such as CCN2/CTGF, SERPINE1/PAI1, SNAI1/SNAIL1 and SMAD7. In Mus musculus (Mouse), this protein is Protein PALS1.